Consider the following 1203-residue polypeptide: Cingulin (1203 aa).

A head region spans residues 7–357 (MAEPRGPVDH…VMVSSGSTKA (351 aa)). A disordered region spans residues 25–48 (EPVSGAEMGTLRRGGRRPAKDARA). The ZIM signature appears at 48-62 (ASTYGVAVRVQGIAG). The interaction with TJP1/ZO1 stretch occupies residues 54–67 (AVRVQGIAGQPFVV). A disordered region spans residues 89-127 (GASGALSSDLELPENPYSQVKGFPAPSQSSTSDEEPGAY). Serine 95, serine 96, serine 135, serine 137, serine 140, serine 155, serine 165, serine 214, serine 217, serine 258, serine 276, serine 338, and serine 351 each carry phosphoserine. A disordered region spans residues 186–266 (DSQLGGQARG…LSPLSGFSRS (81 aa)). Positions 207–231 (EQRKRSKSLDSRLPRDTFEERERQS) are enriched in basic and acidic residues. A compositionally biased stretch (polar residues) spans 232-266 (TNHWTSSTKYDNHVGTSKQPAQSQNLSPLSGFSRS). Positions 358–1160 (VAGQGELTRK…SLEKDSWRKA (803 aa)) form a coiled coil. At lysine 579 the chain carries N6-acetyllysine. Threonine 712 carries the post-translational modification Phosphothreonine. 2 disordered regions span residues 1034–1053 (LASS…LESQ) and 1154–1181 (KDSW…EEFD). The span at 1044-1053 (SASLSQLESQ) shows a compositional bias: low complexity. The interval 1161–1203 (SRSAAESALKNEGLSSDEEFDSVYDPSSIASLLTESNLQTSSC) is tail. Phosphoserine occurs at positions 1175, 1176, and 1182.

Belongs to the cingulin family. As to quaternary structure, homodimer. Interacts with TJP1/ZO1. Interacts with SPEF1. As to expression, localized on the cytoplasmic face of tight junctions of polarized epithelia and some endothelia. Expressed in pancreas, kidney, liver and lung, but not in skeletal muscle, placenta, brain or heart.

The protein resides in the cell junction. Its subcellular location is the tight junction. In terms of biological role, probably plays a role in the formation and regulation of the tight junction (TJ) paracellular permeability barrier. The chain is Cingulin from Homo sapiens (Human).